A 112-amino-acid polypeptide reads, in one-letter code: Putative pterin-4-alpha-carbinolamine dehydratase (112 aa).

The protein belongs to the pterin-4-alpha-carbinolamine dehydratase family.

It catalyses the reaction (4aS,6R)-4a-hydroxy-L-erythro-5,6,7,8-tetrahydrobiopterin = (6R)-L-erythro-6,7-dihydrobiopterin + H2O. The protein is Putative pterin-4-alpha-carbinolamine dehydratase of Shewanella oneidensis (strain ATCC 700550 / JCM 31522 / CIP 106686 / LMG 19005 / NCIMB 14063 / MR-1).